The following is a 202-amino-acid chain: Holliday junction branch migration complex subunit RuvA (202 aa).

Residues 1–62 (MIGYLRGRLH…EDAMELYGFT (62 aa)) form a domain I region. Residues 63 to 141 (RPEELHLFTL…KSGLVDGTET (79 aa)) form a domain II region. Residues 141 to 145 (TEAIP) are flexible linker. Positions 146 to 202 (AGGGDNDEALAALLALGYSREEIGPILARVRQELGNAAPTTAVLQAVLKTFGRGGGD) are domain III.

It belongs to the RuvA family. In terms of assembly, homotetramer. Forms an RuvA(8)-RuvB(12)-Holliday junction (HJ) complex. HJ DNA is sandwiched between 2 RuvA tetramers; dsDNA enters through RuvA and exits via RuvB. An RuvB hexamer assembles on each DNA strand where it exits the tetramer. Each RuvB hexamer is contacted by two RuvA subunits (via domain III) on 2 adjacent RuvB subunits; this complex drives branch migration. In the full resolvosome a probable DNA-RuvA(4)-RuvB(12)-RuvC(2) complex forms which resolves the HJ.

The protein localises to the cytoplasm. Its function is as follows. The RuvA-RuvB-RuvC complex processes Holliday junction (HJ) DNA during genetic recombination and DNA repair, while the RuvA-RuvB complex plays an important role in the rescue of blocked DNA replication forks via replication fork reversal (RFR). RuvA specifically binds to HJ cruciform DNA, conferring on it an open structure. The RuvB hexamer acts as an ATP-dependent pump, pulling dsDNA into and through the RuvAB complex. HJ branch migration allows RuvC to scan DNA until it finds its consensus sequence, where it cleaves and resolves the cruciform DNA. This is Holliday junction branch migration complex subunit RuvA from Moorella thermoacetica (strain ATCC 39073 / JCM 9320).